The sequence spans 135 residues: Hemoglobin subunit beta-3 (135 aa).

The 134-residue stretch at 2–135 (HWTAEEKALV…VVDALSKAYQ (134 aa)) folds into the Globin domain. Heme b-binding residues include His-57 and His-81.

Belongs to the globin family. Hb 3 is a heterotetramer of two alpha and two beta-3 chains. As to expression, red blood cells (at protein level).

Its function is as follows. Involved in oxygen transport from gills to the various peripheral tissues. The sequence is that of Hemoglobin subunit beta-3 from Somniosus microcephalus (Greenland sleeper shark).